Reading from the N-terminus, the 205-residue chain is Large ribosomal subunit protein uL3 (205 aa).

It belongs to the universal ribosomal protein uL3 family. Part of the 50S ribosomal subunit. Forms a cluster with proteins L14 and L19.

One of the primary rRNA binding proteins, it binds directly near the 3'-end of the 23S rRNA, where it nucleates assembly of the 50S subunit. In Thermosipho melanesiensis (strain DSM 12029 / CIP 104789 / BI429), this protein is Large ribosomal subunit protein uL3.